The primary structure comprises 341 residues: Cysteine and histidine-rich domain-containing protein 1 (341 aa).

Zn(2+)-binding residues include C5, C10, C24, H27, C42, C43, C59, H64, C155, C160, C174, H177, C192, C193, C209, and H214. 2 CHORD domains span residues 5-64 and 155-214; these read CYNK…KGPH and CKNG…RGKH. Residues 61 to 81 are disordered; that stretch reads KGPHNQEKPAEPVKPEVKSSL. Over residues 64–81 the composition is skewed to basic and acidic residues; sequence HNQEKPAEPVKPEVKSSL. Positions 225-314 constitute a CS domain; the sequence is VVPCRFDWHQ…AEPMSWARLD (90 aa). Residues 313–341 form a disordered region; it reads LDLPPVAPPKEKEKEKDVDSEDECDDDED. Residues 330–341 are compositionally biased toward acidic residues; sequence VDSEDECDDDED.

Its function is as follows. Regulates centrosome duplication. This is Cysteine and histidine-rich domain-containing protein 1 (chordc1) from Danio rerio (Zebrafish).